We begin with the raw amino-acid sequence, 175 residues long: Outer membrane protein assembly factor BamE (175 aa).

An N-terminal signal peptide occupies residues 1–21 (MQNTKLLLTSFTFVGLLALAG). Cys-22 carries the N-palmitoyl cysteine lipid modification. The S-diacylglycerol cysteine moiety is linked to residue Cys-22. Disordered regions lie at residues 117-147 (ALLG…KPGS) and 156-175 (IDNV…TSPQ).

The protein belongs to the BamE family. Part of the Bam complex.

The protein resides in the cell outer membrane. Functionally, part of the outer membrane protein assembly complex, which is involved in assembly and insertion of beta-barrel proteins into the outer membrane. May have a structural role in maintaining the cell envelope integrity. In Pseudomonas fluorescens, this protein is Outer membrane protein assembly factor BamE.